The sequence spans 601 residues: 3-hydroxy-3-methylglutaryl-coenzyme A reductase (601 aa).

Positions 1-34 are disordered; that stretch reads MDSRRRSPTVTAKAAAGELPLAPHEGQNQQPSIP. 2 helical membrane-spanning segments follow: residues 36 to 58 and 86 to 106; these read SSDV…FFSV and ALAS…LDFV. Residues 107–179 form a linker region; sequence QSLIYKPNNE…PLITPQNSEE (73 aa). A catalytic region spans residues 180-601; the sequence is DEDIIKAVVA…IASSQLESDS (422 aa). Glu273 serves as the catalytic Charge relay system. The N-linked (GlcNAc...) asparagine glycan is linked to Asn337. Active-site charge relay system residues include Lys405 and Asp481. The active-site Proton donor is the His579. Residue Asn583 is glycosylated (N-linked (GlcNAc...) asparagine).

This sequence belongs to the HMG-CoA reductase family.

The protein localises to the endoplasmic reticulum membrane. The enzyme catalyses (R)-mevalonate + 2 NADP(+) + CoA = (3S)-3-hydroxy-3-methylglutaryl-CoA + 2 NADPH + 2 H(+). It participates in metabolic intermediate biosynthesis; (R)-mevalonate biosynthesis; (R)-mevalonate from acetyl-CoA: step 3/3. Functionally, catalyzes the synthesis of mevalonate. The specific precursor of all isoprenoid compounds present in plants. The polypeptide is 3-hydroxy-3-methylglutaryl-coenzyme A reductase (HMGR) (Catharanthus roseus (Madagascar periwinkle)).